The following is a 322-amino-acid chain: MHEVDIAVVGAGPAGLFAAYYAGFRGLSVAVVDALPEPGGQITAMYPEKLIHDVAGFPAIKGRDLVANLVAQAAPFAPRYLLGTRAEKLSYADGRPVLGLAGGEQLHCGAVVITGGLGSFTPRPLPVAERFVGTGIIYFVPQPADLTGQDVLIVGGGDSAFDWASTLQPLARSVTLVHRREKFRAHAATVARVHALPVRVVVNAEVTRLHGGGAVTGAEITVRGGAAELLPVDTVVAALGFTADLGPLAEWGLRLDRRHLVVDSTMATNLPRVFAAGDITEYQGKVRLIATGFGEAATAVNNAAVVLDPAAHLFPGHSSDET.

7 residues coordinate FAD: Asp33, Gln41, Tyr46, Ala86, Phe120, Asp278, and Ser319.

Belongs to the ferredoxin--NADP reductase type 2 family. Homodimer. Requires FAD as cofactor.

The enzyme catalyses 2 reduced [2Fe-2S]-[ferredoxin] + NADP(+) + H(+) = 2 oxidized [2Fe-2S]-[ferredoxin] + NADPH. The chain is Ferredoxin--NADP reductase from Salinispora tropica (strain ATCC BAA-916 / DSM 44818 / JCM 13857 / NBRC 105044 / CNB-440).